The following is a 46-amino-acid chain: Mu-segestritoxin-Sf1h (46 aa).

Disulfide bonds link Cys3-Cys19, Cys10-Cys22, Cys18-Cys42, and Cys24-Cys40. A keys region for toxin activity region spans residues 31 to 33; that stretch reads RPW.

It belongs to the neurotoxin 16 (SFI) family. In terms of tissue distribution, expressed by the venom gland.

It is found in the secreted. Insecticidal toxin. It inhibits insect voltage-gated sodium channels (Nav) by partially blocking the channel pore in DUM neurons from the American cockroach, not by acting as a gating modifier. The inhibition is only partially reversible after prolonged washout. In vivo, the toxin causes flaccid paralysis followed by death when injected into Heliothis virescens larvae. It also causes uncoordinated movements followed by full paralysis to sheep blowflies (Lucilia cuprina). When the toxin is fused to snowdrop lectin, it is orally active against larvae of the tomato moth (Laconobia oleracea), the rice brown planthopper (Nilaparvata lugens), and the peach-potato aphid (Myzus persicae). The sequence is that of Mu-segestritoxin-Sf1h from Segestria florentina (Tube-web spider).